Reading from the N-terminus, the 282-residue chain is Pyridoxal 5'-phosphate synthase subunit PdxS (282 aa).

Position 14 (Asp-14) interacts with D-ribose 5-phosphate. Lys-71 functions as the Schiff-base intermediate with D-ribose 5-phosphate in the catalytic mechanism. Position 143 (Gly-143) interacts with D-ribose 5-phosphate. A D-glyceraldehyde 3-phosphate-binding site is contributed by Arg-155. D-ribose 5-phosphate contacts are provided by residues Gly-204 and 225-226 (GS).

This sequence belongs to the PdxS/SNZ family. As to quaternary structure, in the presence of PdxT, forms a dodecamer of heterodimers.

The enzyme catalyses aldehydo-D-ribose 5-phosphate + D-glyceraldehyde 3-phosphate + L-glutamine = pyridoxal 5'-phosphate + L-glutamate + phosphate + 3 H2O + H(+). Its pathway is cofactor biosynthesis; pyridoxal 5'-phosphate biosynthesis. Its function is as follows. Catalyzes the formation of pyridoxal 5'-phosphate from ribose 5-phosphate (RBP), glyceraldehyde 3-phosphate (G3P) and ammonia. The ammonia is provided by the PdxT subunit. Can also use ribulose 5-phosphate and dihydroxyacetone phosphate as substrates, resulting from enzyme-catalyzed isomerization of RBP and G3P, respectively. This Treponema denticola (strain ATCC 35405 / DSM 14222 / CIP 103919 / JCM 8153 / KCTC 15104) protein is Pyridoxal 5'-phosphate synthase subunit PdxS.